The primary structure comprises 377 residues: LIM/homeobox protein Lhx9 (377 aa).

LIM zinc-binding domains are found at residues Ala-50–Val-111 and Gln-112–Gly-174. Disordered regions lie at residues Asn-228–Lys-249, Arg-309–Thr-346, and Ser-358–Phe-377. A DNA-binding region (homeobox) is located at residues Thr-248–Val-307. Residues Leu-333–Thr-346 show a composition bias toward low complexity. Residues Ser-365–Phe-377 are compositionally biased toward polar residues.

The protein localises to the nucleus. In terms of biological role, may be involved in gonadal development. In Psalidodon fasciatus (Banded astyanax), this protein is LIM/homeobox protein Lhx9 (lhx9).